The primary structure comprises 191 residues: Transcription factor HES-2 (191 aa).

Residues 1 to 26 (MAPNVALADSMHNYQPKPGKRNQEAS) form a disordered region. Positions 28-85 (LRKTLKPLMEKRRRARINESLNQLKTLILPLIGKDNSRYSKLEKADILEMTVRFLRDI) constitute a bHLH domain. One can recognise an Orange domain in the interval 97–130 (YKEGYRACVERLSAILGKSHVLTGEASNRLLEYL). Composition is skewed to polar residues over residues 159-173 (RTSQFGSPLQNQPSS) and 182-191 (QLNSSIWRPW). The segment at 159 to 191 (RTSQFGSPLQNQPSSHRPAPCPPQLNSSIWRPW) is disordered. The WRPW motif signature appears at 188 to 191 (WRPW).

In terms of assembly, transcription repression requires formation of a complex with a corepressor protein of the Groucho/TLE family. Homodimer, and heterodimer with the other bHLH proteins neurod1, neurod4/ath3, hes1/hairy1 and hes6r. Weakly interacts with the bHLH protein hey1/hrt1. In terms of tissue distribution, expressed in the animal half of the early cleavage stage embryo. During neurulation and organogenesis, the otic vesicles and retina are the main sites of expression; expression in otic placodes begins as early as stage 13.5, persisting in the otic vesicles at stage 30 and beyond. Also transiently expressed in the olfactory placodes. In addition, weakly expressed in primary neurons. Expression in the retina begins at stage 21, and is seen throughout the neural retina by stage 30. From stage 35 onwards, expression progressively declines in the central retina, while remaining high in the margins. At stage 41, expression becomes restricted to the ciliary marginal zone (CMZ) of the retina, the only region where retinogenesis is still occurring.

It localises to the nucleus. Transcriptional repressor. Essential in the retina to govern glial versus neuronal differentiation. Promotes gliogenesis through the inhibition of neuronal differentiation by at least two distinct mechanisms; represses proneural gene transcription, and also physically interacts with proneural proteins, including neurod1. The sequence is that of Transcription factor HES-2 (hes2) from Xenopus laevis (African clawed frog).